Consider the following 250-residue polypeptide: Anamorsin homolog 1 (250 aa).

The tract at residues 1–104 (MNLKITINQQ…KKLNIPQQEF (104 aa)) is N-terminal SAM-like domain. The interval 104–149 (FNNCYGKYDYIEQKFQNQINFFKQVDINGKQEIIDENELLDDGVQV) is linker. [2Fe-2S] cluster contacts are provided by cysteine 155, cysteine 162, cysteine 165, and cysteine 167. The tract at residues 155 to 167 (CASKPRACANCTC) is fe-S binding site A. [4Fe-4S] cluster is bound by residues cysteine 193, cysteine 196, cysteine 204, and cysteine 207. 2 consecutive short sequence motifs (cx2C motif) follow at residues 193–196 (CGSC) and 204–207 (CANC). The tract at residues 193-207 (CGSCYLGDAFRCANC) is fe-S binding site B.

The protein belongs to the anamorsin family. Monomer. [2Fe-2S] cluster is required as a cofactor. It depends on [4Fe-4S] cluster as a cofactor.

It is found in the cytoplasm. The protein resides in the mitochondrion intermembrane space. Functionally, component of the cytosolic iron-sulfur (Fe-S) protein assembly (CIA) machinery. Required for the maturation of extramitochondrial Fe-S proteins. Part of an electron transfer chain functioning in an early step of cytosolic Fe-S biogenesis, facilitating the de novo assembly of a [4Fe-4S] cluster on the cytosolic Fe-S scaffold complex. Electrons are transferred from NADPH via a FAD- and FMN-containing diflavin oxidoreductase. Together with the diflavin oxidoreductase, also required for the assembly of the diferric tyrosyl radical cofactor of ribonucleotide reductase (RNR), probably by providing electrons for reduction during radical cofactor maturation in the catalytic small subunit. The polypeptide is Anamorsin homolog 1 (Paramecium tetraurelia).